A 288-amino-acid chain; its full sequence is uncharacterized protein (288 aa).

It to M.bovis Mb1522c, M.leprae ML1804 and M.avium MAV321.

This is an uncharacterized protein from Mycobacterium tuberculosis (strain CDC 1551 / Oshkosh).